The primary structure comprises 144 residues: Large ribosomal subunit protein uL15 (144 aa).

The disordered stretch occupies residues 1 to 54 (MRLNTLSPAEGSKKAGKRLGRGIGSGLGKTGGRGHKGQKSRSGGGVRRGFEGGQ). Residues 21-31 (RGIGSGLGKTG) show a composition bias toward gly residues.

Belongs to the universal ribosomal protein uL15 family. In terms of assembly, part of the 50S ribosomal subunit.

Functionally, binds to the 23S rRNA. The chain is Large ribosomal subunit protein uL15 from Salmonella arizonae (strain ATCC BAA-731 / CDC346-86 / RSK2980).